We begin with the raw amino-acid sequence, 166 residues long: Large ribosomal subunit protein uL10 (166 aa).

Belongs to the universal ribosomal protein uL10 family. As to quaternary structure, part of the ribosomal stalk of the 50S ribosomal subunit. The N-terminus interacts with L11 and the large rRNA to form the base of the stalk. The C-terminus forms an elongated spine to which L12 dimers bind in a sequential fashion forming a multimeric L10(L12)X complex.

Its function is as follows. Forms part of the ribosomal stalk, playing a central role in the interaction of the ribosome with GTP-bound translation factors. This Shewanella woodyi (strain ATCC 51908 / MS32) protein is Large ribosomal subunit protein uL10.